The following is a 238-amino-acid chain: Uridylate kinase (238 aa).

Position 12–15 (12–15 (KLSG)) interacts with ATP. Residue Gly54 participates in UMP binding. Positions 55 and 59 each coordinate ATP. Residues Asp74 and 135 to 142 (TGNPFFTT) each bind UMP. Residues Thr162, Tyr168, and Asp171 each contribute to the ATP site.

This sequence belongs to the UMP kinase family. As to quaternary structure, homohexamer.

It is found in the cytoplasm. It catalyses the reaction UMP + ATP = UDP + ADP. It participates in pyrimidine metabolism; CTP biosynthesis via de novo pathway; UDP from UMP (UMPK route): step 1/1. With respect to regulation, inhibited by UTP. In terms of biological role, catalyzes the reversible phosphorylation of UMP to UDP. This is Uridylate kinase from Aromatoleum aromaticum (strain DSM 19018 / LMG 30748 / EbN1) (Azoarcus sp. (strain EbN1)).